A 2173-amino-acid chain; its full sequence is Mediator of DNA damage checkpoint protein 1 (2173 aa).

The segment covering Met-1 to Gln-19 has biased composition (acidic residues). A disordered region spans residues Met-1–Glu-22. Residues Met-1–Thr-150 form an interaction with CHEK2 region. Residues Glu-2–Thr-222 form an interaction with the MRN complex region. Thr-4 is subject to Phosphothreonine. In terms of domain architecture, FHA spans Asn-54–Lys-105. Residue Ser-108 is modified to Phosphoserine. A required for nuclear localization (NLS1) region spans residues Leu-145–Glu-570. Position 146 is a phosphothreonine (Thr-146). Ser-168, Ser-176, Ser-198, and Ser-220 each carry phosphoserine. A disordered region spans residues Ser-198–Leu-320. Thr-222 carries the post-translational modification Phosphothreonine. Over residues Gly-227 to Thr-244 the composition is skewed to low complexity. The segment covering Gln-259–Val-276 has biased composition (basic and acidic residues). Phosphoserine is present on Ser-301. Thr-303 bears the Phosphothreonine mark. The segment covering Asp-308–Leu-320 has biased composition (basic and acidic residues). Ser-331 is modified (phosphoserine). The residue at position 333 (Thr-333) is a Phosphothreonine. The interval Gly-359–Glu-383 is disordered. Phosphoserine is present on residues Ser-374 and Ser-378. At Thr-380 the chain carries Phosphothreonine. Ser-396, Ser-399, and Ser-404 each carry phosphoserine. Thr-406 is modified (phosphothreonine). Ser-413 is subject to Phosphoserine. A disordered region spans residues Leu-444–Ser-515. Thr-451 is modified (phosphothreonine). Position 455 is a phosphoserine (Ser-455). Thr-457 is subject to Phosphothreonine. Phosphoserine is present on residues Ser-487, Ser-497, Ser-500, Ser-506, Ser-507, and Ser-515. Thr-525 bears the Phosphothreonine mark. Residue Ser-592 is modified to Phosphoserine. Lys-618 participates in a covalent cross-link: Glycyl lysine isopeptide (Lys-Gly) (interchain with G-Cter in SUMO1); alternate. Lys-618 is covalently cross-linked (Glycyl lysine isopeptide (Lys-Gly) (interchain with G-Cter in SUMO2); alternate). Position 631 is a phosphoserine (Ser-631). Disordered regions lie at residues Val-652–Asp-697 and His-773–Ser-1770. A compositionally biased stretch (basic and acidic residues) spans Gly-673–Glu-687. The segment covering Asp-688 to Asp-697 has biased composition (acidic residues). Ser-782 and Ser-795 each carry phosphoserine. Residue Lys-814 is modified to N6-acetyllysine. Composition is skewed to basic and acidic residues over residues Glu-821–Thr-846, Glu-853–Lys-864, Asp-870–Gln-903, and Ala-916–Pro-953. 5 positions are modified to phosphoserine: Ser-957, Ser-1000, Ser-1035, Ser-1070, and Ser-1088. A compositionally biased stretch (polar residues) spans Ser-957–Ser-969. Over residues Thr-1079–Glu-1090 the composition is skewed to basic and acidic residues. Residues Pro-1105–Ser-1115 are compositionally biased toward basic residues. Residues Pro-1131–Ser-1156 show a composition bias toward polar residues. Positions Ser-1150–Glu-1694 are interaction with the PRKDC complex. Positions Val-1157–Glu-1169 are enriched in low complexity. Thr-1159 is subject to Phosphothreonine. The span at Gln-1171 to Thr-1189 shows a compositional bias: polar residues. Phosphothreonine is present on Thr-1200. Position 1237 is a phosphoserine (Ser-1237). Phosphothreonine occurs at positions 1241, 1282, and 1304. Over residues Val-1280–Glu-1292 the composition is skewed to low complexity. The segment covering Gln-1294–Ser-1320 has biased composition (polar residues). Residues Val-1321–Glu-1333 are compositionally biased toward low complexity. Polar residues predominate over residues Gln-1335–Thr-1353. The segment covering Thr-1390 to Ser-1402 has biased composition (low complexity). Polar residues-rich tracts occupy residues Pro-1418–Pro-1434, Lys-1456–Ser-1487, Gln-1499–Lys-1527, and Gln-1540–Arg-1559. Ser-1483 and Ser-1484 each carry phosphoserine. Lys-1486 is modified (N6-acetyllysine). Thr-1509 and Thr-1550 each carry phosphothreonine. Residues Val-1567–Pro-1578 show a composition bias toward low complexity. Residues Gln-1581–Thr-1598 show a composition bias toward polar residues. Phosphothreonine is present on residues Thr-1617 and Thr-1632. The span at Ser-1626–Ala-1639 shows a compositional bias: polar residues. A Phosphoserine modification is found at Ser-1648. A phosphothreonine mark is found at Thr-1651 and Thr-1673. Polar residues predominate over residues Pro-1664–Ala-1680. At Ser-1688 the chain carries Phosphoserine. 4 positions are modified to phosphothreonine: Thr-1692, Thr-1714, Thr-1748, and Thr-1755. Residues Pro-1705–Ala-1721 show a composition bias toward polar residues. A compositionally biased stretch (polar residues) spans Gln-1761–Ser-1770. At Ser-1765 the chain carries Phosphoserine. Thr-1781 carries the post-translational modification Phosphothreonine. The required for nuclear localization (NLS2) stretch occupies residues Pro-1782–Thr-2173. Phosphoserine is present on residues Ser-1786 and Ser-1795. Positions Arg-1809–Asn-1971 are disordered. Lys-1824 participates in a covalent cross-link: Glycyl lysine isopeptide (Lys-Gly) (interchain with G-Cter in SUMO2). Residue Ser-1859 is modified to Phosphoserine. Lys-1874 is covalently cross-linked (Glycyl lysine isopeptide (Lys-Gly) (interchain with G-Cter in SUMO2)). Thr-1884 is subject to Phosphothreonine. Residue Ser-1904 is modified to Phosphoserine. Polar residues predominate over residues His-1907–Thr-1920. Lys-1924 participates in a covalent cross-link: Glycyl lysine isopeptide (Lys-Gly) (interchain with G-Cter in SUMO1); alternate. Lys-1924 is covalently cross-linked (Glycyl lysine isopeptide (Lys-Gly) (interchain with G-Cter in SUMO2); alternate). Basic and acidic residues predominate over residues Ala-1931–Met-1941. Position 1942 is a phosphothreonine (Thr-1942). 2 BRCT domains span residues Ala-1976–Val-2054 and Arg-2075–Ser-2166. An Omega-N-methylarginine modification is found at Arg-2027.

In terms of assembly, homodimer. Interacts with H2AX, which requires phosphorylation of H2AX on 'Ser-139'. Interacts with the MRN complex, composed of MRE11, RAD50, and NBN. Interacts with CHEK2, which requires ATM-mediated phosphorylation of 'Thr-68' within the FHA domain of CHEK2. Interacts constitutively with the BRCA1-BARD1 complex, SMC1A and TP53BP1. Interacts with ATM and FANCD2, and these interactions are reduced upon DNA damage. Also interacts with the PRKDC complex, composed of XRCC6/KU70, XRCC5/KU80 and PRKDC/XRCC7. This interaction may be required for PRKDC autophosphorylation, which is essential for DNA double strand break (DSB) repair. When phosphorylated by ATM, interacts with RNF8 (via FHA domain). Interacts with CEP164. When phosphorylated, interacts with APTX (via FHA-like domain). Interacts (when phosphorylated) with TOPBP1; promoting TOPBP1 localization to DNA damage sites during mitosis. Interacts (when phosphorylated) with NBN; promoting NBN and MRN complex localization to DNA damage sites. Phosphorylated upon exposure to ionizing radiation (IR), ultraviolet radiation (UV), and hydroxyurea (HU). Phosphorylation in response to IR requires ATM, NBN, and possibly CHEK2. Also phosphorylated during the G2/M phase of the cell cycle and during activation of the mitotic spindle checkpoint. Phosphorylation at Thr-4 by ATM stabilizes and enhances homodimerization via the FHA domain. Phosphorylated at Ser-168 and Ser-198 by CK2 in response to DNA damage during mitosis, promoting interaction with TOPBP1. Phosphorylated by CK2 in response to DNA damage, promoting interaction with NBN and recruitment of the MRN complex to DNA damage sites. In terms of processing, sumoylation at Lys-1924 by PIAS4 following DNA damage promotes ubiquitin-mediated degradation. Post-translationally, ubiquitinated by RNF4, leading to proteasomal degradation; undergoes 'Lys-48'-linked polyubiquitination.

The protein resides in the nucleus. Its subcellular location is the chromosome. Functionally, histone reader protein required for checkpoint-mediated cell cycle arrest in response to DNA damage within both the S phase and G2/M phases of the cell cycle. Specifically recognizes and binds histone H2AX phosphorylated at 'Ser-139', a marker of DNA damage, serving as a scaffold for the recruitment of DNA repair and signal transduction proteins to discrete foci of DNA damage sites. Also required for downstream events subsequent to the recruitment of these proteins. These include phosphorylation and activation of the ATM, CHEK1 and CHEK2 kinases, and stabilization of TP53/p53 and apoptosis. ATM and CHEK2 may also be activated independently by a parallel pathway mediated by TP53BP1. Required for chromosomal stability during mitosis by promoting recruitment of TOPBP1 to DNA double strand breaks (DSBs): TOPBP1 forms filamentous assemblies that bridge MDC1 and tether broken chromosomes during mitosis. Required for the repair of DSBs via homologous recombination by promoting recruitment of NBN component of the MRN complex to DSBs. This Macaca mulatta (Rhesus macaque) protein is Mediator of DNA damage checkpoint protein 1 (MDC1).